A 476-amino-acid polypeptide reads, in one-letter code: Cytoplasmic 60S subunit biogenesis factor ZNF622 (476 aa).

Ala-2 carries the post-translational modification N-acetylalanine. 2 U1-type zinc fingers span residues 4–28 and 69–93; these read LTCITCRVAFRDAELQRAHYKTDWH and TYCTACGKKFATFNAYENHLGSRRH. The tract at residues 137 to 243 is disordered; the sequence is AIKAQPSTSP…AEDAAAEESP (107 aa). Residues 167–177 are compositionally biased toward basic and acidic residues; sequence VPERDPTEKPP. Over residues 195–239 the composition is skewed to acidic residues; it reads EDGEEEGEEEEEDDEDEDWEDIDSDDGLECEDPGVEDQDAEDAAA. Residue Ser-275 is modified to Phosphoserine.

This sequence belongs to the REI1 family. Homo- and heterodimer. Associates with pre-60S ribosomal particles. Interacts with MELK and MYBL2. Interacts with DNAJC21. In terms of processing, phosphorylated by MELK. The phosphorylation may redirect the protein to the nucleus. Post-translationally, ubiquitinated by HECTD1, leading to its degradation.

The protein localises to the cytoplasm. It localises to the nucleus. Functionally, pre-60S-associated cytoplasmic factor involved in the cytoplasmic maturation of the 60S subunit. This is Cytoplasmic 60S subunit biogenesis factor ZNF622 (Znf622) from Mus musculus (Mouse).